The following is a 225-amino-acid chain: Large ribosomal subunit protein uL1 (225 aa).

It belongs to the universal ribosomal protein uL1 family. In terms of assembly, part of the 50S ribosomal subunit.

Functionally, binds directly to 23S rRNA. The L1 stalk is quite mobile in the ribosome, and is involved in E site tRNA release. In terms of biological role, protein L1 is also a translational repressor protein, it controls the translation of the L11 operon by binding to its mRNA. The protein is Large ribosomal subunit protein uL1 of Rhodopirellula baltica (strain DSM 10527 / NCIMB 13988 / SH1).